Consider the following 917-residue polypeptide: Glutamate receptor (917 aa).

The signal sequence occupies residues Met1–Ser19. Topologically, residues Thr20 to Ser556 are extracellular. Asn62, Asn95, Asn121, Asn125, Asn229, Asn251, Asn261, Asn272, Asn418, Asn419, Asn424, and Asn491 each carry an N-linked (GlcNAc...) asparagine glycan. Residues Ser557 to Val577 traverse the membrane as a helical segment. Over Ser578 to Ser631 the chain is Cytoplasmic. The chain crosses the membrane as a helical span at residues Val632–Leu652. Topologically, residues Thr653–Asn818 are extracellular. A glycan (N-linked (GlcNAc...) asparagine) is linked at Asn775. The helical transmembrane segment at Val819–Phe839 threads the bilayer. Topologically, residues Glu840–Val917 are cytoplasmic. Positions His871–Thr896 are disordered.

Belongs to the glutamate-gated ion channel (TC 1.A.10.1) family.

Its subcellular location is the cell membrane. The protein resides in the postsynaptic cell membrane. Functionally, receptor for glutamate. L-glutamate acts as an excitatory neurotransmitter at many synapses in the central nervous system. The postsynaptic actions of Glu are mediated by a variety of receptors. The sequence is that of Glutamate receptor from Lymnaea stagnalis (Great pond snail).